The sequence spans 468 residues: 3-isopropylmalate dehydratase large subunit (468 aa).

3 residues coordinate [4Fe-4S] cluster: Cys-347, Cys-407, and Cys-410.

This sequence belongs to the aconitase/IPM isomerase family. LeuC type 1 subfamily. Heterodimer of LeuC and LeuD. The cofactor is [4Fe-4S] cluster.

It catalyses the reaction (2R,3S)-3-isopropylmalate = (2S)-2-isopropylmalate. The protein operates within amino-acid biosynthesis; L-leucine biosynthesis; L-leucine from 3-methyl-2-oxobutanoate: step 2/4. Functionally, catalyzes the isomerization between 2-isopropylmalate and 3-isopropylmalate, via the formation of 2-isopropylmaleate. The protein is 3-isopropylmalate dehydratase large subunit of Prochlorococcus marinus (strain AS9601).